Consider the following 226-residue polypeptide: MGAERVGRAPGVNAKRAVQTQGVQSPSVKRSVRWVRGLCEVLLFSGVFVSAVSFLLHSAAVPPPERQVVPAHFERIAMQFPRQVSQGACAMATFSLVALQEKDKAHTEVHLVLRTPAGKEAKTVRAFALPPKGIAQLGTDAATAGVSRAGSQDVTHVALLGISIFWEPGDWMLEAQVRVPGGKPYVRRAPLRIEKKEFPREELRLDRKNTAIAQDKSERKKVQRDA.

2 disordered regions span residues 1 to 20 and 205 to 226; these read MGAE…AVQT and LDRK…QRDA.

This is an uncharacterized protein from Treponema pallidum (strain Nichols).